The primary structure comprises 456 residues: Glutamyl-tRNA reductase (456 aa).

Residues 49–52 (TCNR), Ser-109, 114–116 (EQQ), and Gln-120 contribute to the substrate site. The active-site Nucleophile is the Cys-50. Residue 189 to 194 (GAGSMG) coordinates NADP(+).

It belongs to the glutamyl-tRNA reductase family. As to quaternary structure, homodimer.

It catalyses the reaction (S)-4-amino-5-oxopentanoate + tRNA(Glu) + NADP(+) = L-glutamyl-tRNA(Glu) + NADPH + H(+). It participates in porphyrin-containing compound metabolism; protoporphyrin-IX biosynthesis; 5-aminolevulinate from L-glutamyl-tRNA(Glu): step 1/2. Catalyzes the NADPH-dependent reduction of glutamyl-tRNA(Glu) to glutamate 1-semialdehyde (GSA). This is Glutamyl-tRNA reductase from Mycolicibacterium vanbaalenii (strain DSM 7251 / JCM 13017 / BCRC 16820 / KCTC 9966 / NRRL B-24157 / PYR-1) (Mycobacterium vanbaalenii).